The chain runs to 469 residues: UDP-N-acetylmuramate--L-alanine ligase (469 aa).

118-124 contributes to the ATP binding site; sequence GTHGKTT.

It belongs to the MurCDEF family.

It localises to the cytoplasm. It carries out the reaction UDP-N-acetyl-alpha-D-muramate + L-alanine + ATP = UDP-N-acetyl-alpha-D-muramoyl-L-alanine + ADP + phosphate + H(+). Its pathway is cell wall biogenesis; peptidoglycan biosynthesis. Its function is as follows. Cell wall formation. This Lachnoclostridium phytofermentans (strain ATCC 700394 / DSM 18823 / ISDg) (Clostridium phytofermentans) protein is UDP-N-acetylmuramate--L-alanine ligase.